Here is a 209-residue protein sequence, read N- to C-terminus: Thiamine-phosphate synthase (209 aa).

Residues 38 to 42 (QYRDK) and asparagine 70 contribute to the 4-amino-2-methyl-5-(diphosphooxymethyl)pyrimidine site. Aspartate 71 and aspartate 89 together coordinate Mg(2+). Residue threonine 108 participates in 4-amino-2-methyl-5-(diphosphooxymethyl)pyrimidine binding. Residue 135 to 137 (SNT) participates in 2-[(2R,5Z)-2-carboxy-4-methylthiazol-5(2H)-ylidene]ethyl phosphate binding. A 4-amino-2-methyl-5-(diphosphooxymethyl)pyrimidine-binding site is contributed by lysine 138. Glycine 165 is a 2-[(2R,5Z)-2-carboxy-4-methylthiazol-5(2H)-ylidene]ethyl phosphate binding site.

The protein belongs to the thiamine-phosphate synthase family. Mg(2+) serves as cofactor.

It catalyses the reaction 2-[(2R,5Z)-2-carboxy-4-methylthiazol-5(2H)-ylidene]ethyl phosphate + 4-amino-2-methyl-5-(diphosphooxymethyl)pyrimidine + 2 H(+) = thiamine phosphate + CO2 + diphosphate. The enzyme catalyses 2-(2-carboxy-4-methylthiazol-5-yl)ethyl phosphate + 4-amino-2-methyl-5-(diphosphooxymethyl)pyrimidine + 2 H(+) = thiamine phosphate + CO2 + diphosphate. The catalysed reaction is 4-methyl-5-(2-phosphooxyethyl)-thiazole + 4-amino-2-methyl-5-(diphosphooxymethyl)pyrimidine + H(+) = thiamine phosphate + diphosphate. The protein operates within cofactor biosynthesis; thiamine diphosphate biosynthesis; thiamine phosphate from 4-amino-2-methyl-5-diphosphomethylpyrimidine and 4-methyl-5-(2-phosphoethyl)-thiazole: step 1/1. Functionally, condenses 4-methyl-5-(beta-hydroxyethyl)thiazole monophosphate (THZ-P) and 2-methyl-4-amino-5-hydroxymethyl pyrimidine pyrophosphate (HMP-PP) to form thiamine monophosphate (TMP). The protein is Thiamine-phosphate synthase of Ectopseudomonas mendocina (strain ymp) (Pseudomonas mendocina).